The sequence spans 355 residues: Holliday junction branch migration complex subunit RuvB (355 aa).

The interval 1–43 is disordered; it reads MEEMDDFTVRRGEREDITGAAGPPEERPLDPAAFEEDDEPTLR. Residues 4–203 form a large ATPase domain (RuvB-L) region; the sequence is MDDFTVRRGE…FGFSARLDYY (200 aa). A compositionally biased stretch (basic and acidic residues) spans 7–17; that stretch reads FTVRRGEREDI. Residues L42, R43, G84, K87, T88, S89, 150 to 152, R193, Y203, and R240 contribute to the ATP site; that span reads EDF. T88 is a Mg(2+) binding site. The interval 204-274 is small ATPAse domain (RuvB-S); sequence EPHELEKIVV…TANAALEMQG (71 aa). A head domain (RuvB-H) region spans residues 277–355; the sequence is HLGLDRTDRE…HLGFPVRDGG (79 aa). Positions 313, 332, and 337 each coordinate DNA.

It belongs to the RuvB family. As to quaternary structure, homohexamer. Forms an RuvA(8)-RuvB(12)-Holliday junction (HJ) complex. HJ DNA is sandwiched between 2 RuvA tetramers; dsDNA enters through RuvA and exits via RuvB. An RuvB hexamer assembles on each DNA strand where it exits the tetramer. Each RuvB hexamer is contacted by two RuvA subunits (via domain III) on 2 adjacent RuvB subunits; this complex drives branch migration. In the full resolvosome a probable DNA-RuvA(4)-RuvB(12)-RuvC(2) complex forms which resolves the HJ.

Its subcellular location is the cytoplasm. The catalysed reaction is ATP + H2O = ADP + phosphate + H(+). Functionally, the RuvA-RuvB-RuvC complex processes Holliday junction (HJ) DNA during genetic recombination and DNA repair, while the RuvA-RuvB complex plays an important role in the rescue of blocked DNA replication forks via replication fork reversal (RFR). RuvA specifically binds to HJ cruciform DNA, conferring on it an open structure. The RuvB hexamer acts as an ATP-dependent pump, pulling dsDNA into and through the RuvAB complex. RuvB forms 2 homohexamers on either side of HJ DNA bound by 1 or 2 RuvA tetramers; 4 subunits per hexamer contact DNA at a time. Coordinated motions by a converter formed by DNA-disengaged RuvB subunits stimulates ATP hydrolysis and nucleotide exchange. Immobilization of the converter enables RuvB to convert the ATP-contained energy into a lever motion, pulling 2 nucleotides of DNA out of the RuvA tetramer per ATP hydrolyzed, thus driving DNA branch migration. The RuvB motors rotate together with the DNA substrate, which together with the progressing nucleotide cycle form the mechanistic basis for DNA recombination by continuous HJ branch migration. Branch migration allows RuvC to scan DNA until it finds its consensus sequence, where it cleaves and resolves cruciform DNA. This Rubrobacter xylanophilus (strain DSM 9941 / JCM 11954 / NBRC 16129 / PRD-1) protein is Holliday junction branch migration complex subunit RuvB.